We begin with the raw amino-acid sequence, 1013 residues long: RNA-binding protein 44 (1013 aa).

2 disordered regions span residues 1-25 (MQAT…FQND) and 56-94 (LATE…IFSQ). The segment covering 56 to 76 (LATEERASDKENSIVDQRDLS) has biased composition (basic and acidic residues). Positions 78 to 94 (LSFSENQDSNRGNIFSQ) are enriched in polar residues. A phosphoserine mark is found at S365, S368, S510, S681, and S688. Positions 792 to 865 (FLIHVGGLCP…KSVTVRLVKI (74 aa)) constitute an RRM domain. Residues 905–925 (RAKSRQLESEQDSEFPPLDQG) are disordered.

As to quaternary structure, homodimer. Interacts with TEX14. In terms of tissue distribution, highly expressed in testis. Also expressed in other tissues at lower level.

The protein resides in the cytoplasm. Component of intercellular bridges during meiosis. Intercellular bridges are evolutionarily conserved structures that connect differentiating germ cells. Not required for fertility. The chain is RNA-binding protein 44 (Rbm44) from Mus musculus (Mouse).